We begin with the raw amino-acid sequence, 390 residues long: E3 ubiquitin-protein ligase At4g11680 (390 aa).

The segment covering 1-19 (MSSSSSTTTNTTTESDSSS) has biased composition (low complexity). The disordered stretch occupies residues 1–39 (MSSSSSTTTNTTTESDSSSLPTHIGRSNSDGIIDTTPFL). Helical transmembrane passes span 109-129 (VVFL…AVLI), 142-162 (VWVV…CVEY), 212-232 (MFSF…GQTL), 244-264 (IIFL…ACVI), and 265-285 (GLAV…VADQ). Residues 338–379 (CCICLCEYEDGVELRELPCNHHFHCTCIDKWLHINSRCPLCK) form an RING-type; atypical zinc finger.

It localises to the membrane. It carries out the reaction S-ubiquitinyl-[E2 ubiquitin-conjugating enzyme]-L-cysteine + [acceptor protein]-L-lysine = [E2 ubiquitin-conjugating enzyme]-L-cysteine + N(6)-ubiquitinyl-[acceptor protein]-L-lysine.. It functions in the pathway protein modification; protein ubiquitination. In terms of biological role, mediates E2-dependent protein ubiquitination in vitro. This Arabidopsis thaliana (Mouse-ear cress) protein is E3 ubiquitin-protein ligase At4g11680.